An 83-amino-acid chain; its full sequence is U15-theraphotoxin-Cg1a (83 aa).

The signal sequence occupies residues 1-21; it reads MKAAILLAFAGLALLSVICHA. Positions 22–49 are excised as a propeptide; the sequence is SENVEQDSFEEVFSAIFAMEDDLKPKER. 3 cysteine pairs are disulfide-bonded: cysteine 51/cysteine 66, cysteine 58/cysteine 71, and cysteine 65/cysteine 77. Position 81 is an alanine amide (alanine 81).

This sequence belongs to the neurotoxin 10 (Hwtx-1) family. 66 (Jztx-24) subfamily. In terms of tissue distribution, expressed by the venom gland.

It is found in the secreted. Its function is as follows. Probable ion channel inhibitor. This is U15-theraphotoxin-Cg1a from Chilobrachys guangxiensis (Chinese earth tiger tarantula).